Consider the following 265-residue polypeptide: 3-methyl-2-oxobutanoate hydroxymethyltransferase (265 aa).

The Mg(2+) site is built by aspartate 41 and aspartate 80. Residues 41 to 42, aspartate 80, and lysine 109 each bind 3-methyl-2-oxobutanoate; that span reads DS. Glutamate 111 contacts Mg(2+). Catalysis depends on glutamate 178, which acts as the Proton acceptor.

Belongs to the PanB family. In terms of assembly, homodecamer; pentamer of dimers. The cofactor is Mg(2+).

It localises to the cytoplasm. The catalysed reaction is 3-methyl-2-oxobutanoate + (6R)-5,10-methylene-5,6,7,8-tetrahydrofolate + H2O = 2-dehydropantoate + (6S)-5,6,7,8-tetrahydrofolate. Its pathway is cofactor biosynthesis; (R)-pantothenate biosynthesis; (R)-pantoate from 3-methyl-2-oxobutanoate: step 1/2. Catalyzes the reversible reaction in which hydroxymethyl group from 5,10-methylenetetrahydrofolate is transferred onto alpha-ketoisovalerate to form ketopantoate. This Thermosipho africanus (strain TCF52B) protein is 3-methyl-2-oxobutanoate hydroxymethyltransferase.